A 283-amino-acid polypeptide reads, in one-letter code: Cuticle collagen 49 (283 aa).

The N-terminal stretch at 1–19 is a signal peptide; it reads MWKFVIGSVSTAAFFVSVC. The tract at residues 90-283 is disordered; it reads EPTKNCPAGP…GYCTCPPRTA (194 aa). A compositionally biased stretch (basic and acidic residues) spans 127 to 139; sequence VVIHDMPNPKECI. Residues 143 to 155 show a composition bias toward pro residues; the sequence is AGPPGPPGPPGPL. Over residues 185-204 the composition is skewed to low complexity; the sequence is QGPPGSAGRAGPRGQAGQPG. Residues 213–271 form the Collagen-like domain; that stretch reads GRPGPQGPLGEPGAQGEPGVDGKDGALGAPGRKAENGRPGKRGKDGVAGVPGTRGKEGE. Residues 244–257 are compositionally biased toward basic and acidic residues; sequence RKAENGRPGKRGKD.

The protein belongs to the cuticular collagen family. In terms of assembly, collagen polypeptide chains are complexed within the cuticle by disulfide bonds and other types of covalent cross-links.

Its function is as follows. Probable cuticular collagen-like protein. Nematode cuticles are composed largely of collagen-like proteins. The cuticle functions both as an exoskeleton and as a barrier to protect the worm from its environment. Acts downstream of the Wnt signaling pathway, perhaps in the formation of the adult cuticle. In Caenorhabditis elegans, this protein is Cuticle collagen 49.